We begin with the raw amino-acid sequence, 489 residues long: FAD-containing monooxygenase EthA (489 aa).

Residues Ser-15, Glu-36, 44–47 (TWDL), Asp-56, and Val-104 contribute to the FAD site. NADP(+) is bound at residue 54 to 56 (RSD). NADP(+)-binding positions include 183 to 189 (SGATAVT) and 207 to 208 (RS).

It belongs to the FAD-binding monooxygenase family. Requires FAD as cofactor.

Its subcellular location is the cell membrane. The enzyme catalyses ethionamide + NADPH + O2 + H(+) = ethionamide S-oxide + NADP(+) + H2O. In terms of biological role, monooxygenase able to convert a wide range of ketones to the corresponding esters or lactones via a Baeyer-Villiger oxidation reaction. Can act on long-chain aliphatic ketones (2-hexanone to 2-dodecanone) and on aromatic ketones (phenylacetone and benzylacetone). Is also able to catalyze enantioselective sulfoxidation of methyl-p-tolylsulfide. In vivo, likely functions as a BVMO, but the exact nature of the physiological substrate(s) remains to be established. Its function is as follows. Is responsible for the activation of several thiocarbamide-containing pro-drugs, such as ethionamide (ETH), isoxyl (ISO) and thiacetazone (TAC), into reactive species. This chain is FAD-containing monooxygenase EthA (ethA), found in Mycobacterium bovis (strain ATCC BAA-935 / AF2122/97).